We begin with the raw amino-acid sequence, 411 residues long: MVRWLTAGESHGPALTGIVEGLPAGIPVTTQDVQDALARRRLGYGRGARMKFEQDAVTILGGVRHGRTLGSPVAIQVGNTEWPKWEKVMAADPVPAEELDGLARNAALTRPRPGHADLTGMQKYGFDEARPLLERASARETAARVALGTVARAFLGELGVRIVSHTVAFGEAALPESHPFPVPEDEARLDADPVRCLDPQTSAAMVAEVDDAHRAGETLGGVVEVLVYSVPIGLGSHVHWDRRLDARLAGALMGIQAIKGVQVGDGFATAARRGSAAHDGIARGADGRPRRTSDRAGGIEAGMSTGGLLRVSAAMKPIATVPRALPTVDVATGVETTAHHQRSDVAAVPAAGIVAEAMVALVLADAMLEKFGGDSVAETRRNLEAFRAAVPALPEPGADVVEDGPMGDPLP.

The NADP(+) site is built by arginine 40 and arginine 46. Residues 135 to 137 (RAS) and 256 to 257 (QA) contribute to the FMN site. Positions 278 to 299 (HDGIARGADGRPRRTSDRAGGI) are disordered. Positions 285-294 (ADGRPRRTSD) are enriched in basic and acidic residues. Residues alanine 301, 316-320 (KPIAT), and arginine 342 each bind FMN.

Belongs to the chorismate synthase family. Homotetramer. Requires FMNH2 as cofactor.

It carries out the reaction 5-O-(1-carboxyvinyl)-3-phosphoshikimate = chorismate + phosphate. It functions in the pathway metabolic intermediate biosynthesis; chorismate biosynthesis; chorismate from D-erythrose 4-phosphate and phosphoenolpyruvate: step 7/7. Catalyzes the anti-1,4-elimination of the C-3 phosphate and the C-6 proR hydrogen from 5-enolpyruvylshikimate-3-phosphate (EPSP) to yield chorismate, which is the branch point compound that serves as the starting substrate for the three terminal pathways of aromatic amino acid biosynthesis. This reaction introduces a second double bond into the aromatic ring system. This is Chorismate synthase from Micrococcus luteus (strain ATCC 4698 / DSM 20030 / JCM 1464 / CCM 169 / CCUG 5858 / IAM 1056 / NBRC 3333 / NCIMB 9278 / NCTC 2665 / VKM Ac-2230) (Micrococcus lysodeikticus).